Reading from the N-terminus, the 125-residue chain is Holo-[acyl-carrier-protein] synthase (125 aa).

D8 and E57 together coordinate Mg(2+).

It belongs to the P-Pant transferase superfamily. AcpS family. It depends on Mg(2+) as a cofactor.

It localises to the cytoplasm. The catalysed reaction is apo-[ACP] + CoA = holo-[ACP] + adenosine 3',5'-bisphosphate + H(+). In terms of biological role, transfers the 4'-phosphopantetheine moiety from coenzyme A to a Ser of acyl-carrier-protein. This is Holo-[acyl-carrier-protein] synthase from Blochmanniella pennsylvanica (strain BPEN).